Reading from the N-terminus, the 339-residue chain is DNA-directed RNA polymerase subunit alpha (339 aa).

Positions 1-235 (MVIQKNWQEL…DQLQVFVNFE (235 aa)) are alpha N-terminal domain (alpha-NTD). Residues 251-339 (FNPALLKKVD…DLAKRFEEHY (89 aa)) are alpha C-terminal domain (alpha-CTD).

This sequence belongs to the RNA polymerase alpha chain family. As to quaternary structure, homodimer. The RNAP catalytic core consists of 2 alpha, 1 beta, 1 beta' and 1 omega subunit. When a sigma factor is associated with the core the holoenzyme is formed, which can initiate transcription.

It catalyses the reaction RNA(n) + a ribonucleoside 5'-triphosphate = RNA(n+1) + diphosphate. Functionally, DNA-dependent RNA polymerase catalyzes the transcription of DNA into RNA using the four ribonucleoside triphosphates as substrates. The chain is DNA-directed RNA polymerase subunit alpha from Methylorubrum extorquens (strain CM4 / NCIMB 13688) (Methylobacterium extorquens).